The primary structure comprises 355 residues: Daphnetin O-methyltransferase 1 (355 aa).

Positions 222, 242, and 256 each coordinate S-adenosyl-L-homocysteine. His260 acts as the Proton acceptor in catalysis.

Belongs to the class I-like SAM-binding methyltransferase superfamily. Cation-independent O-methyltransferase family. COMT subfamily.

It carries out the reaction 7,8-dihydroxycoumarin + S-adenosyl-L-methionine = 7-hydroxy-8-methoxycoumarin + S-adenosyl-L-homocysteine + H(+). Its pathway is aromatic compound metabolism. It participates in secondary metabolite biosynthesis. O-methyltransferase involved in the biosynthesis of coumarins natural products such as daphnetin derivatives. Catalyzes specifically the methylation of daphnetin (7,8-dihydroxycoumarin) to produce hydrangetin (7-hydroxy-8-methoxycoumarin). Probably involved in acclimation to low temperature conditions. This chain is Daphnetin O-methyltransferase 1, found in Secale cereale (Rye).